Reading from the N-terminus, the 390-residue chain is Chorismate synthase 2 (390 aa).

The NADP(+) site is built by arginine 39 and arginine 45. FMN is bound by residues 132–134 (RSS), 253–254 (NA), glycine 298, 313–317 (KPIPT), and arginine 339.

The protein belongs to the chorismate synthase family. As to quaternary structure, homotetramer. FMNH2 serves as cofactor.

The catalysed reaction is 5-O-(1-carboxyvinyl)-3-phosphoshikimate = chorismate + phosphate. Its pathway is metabolic intermediate biosynthesis; chorismate biosynthesis; chorismate from D-erythrose 4-phosphate and phosphoenolpyruvate: step 7/7. Catalyzes the anti-1,4-elimination of the C-3 phosphate and the C-6 proR hydrogen from 5-enolpyruvylshikimate-3-phosphate (EPSP) to yield chorismate, which is the branch point compound that serves as the starting substrate for the three terminal pathways of aromatic amino acid biosynthesis. This reaction introduces a second double bond into the aromatic ring system. The chain is Chorismate synthase 2 from Bacillus cereus (strain ATCC 14579 / DSM 31 / CCUG 7414 / JCM 2152 / NBRC 15305 / NCIMB 9373 / NCTC 2599 / NRRL B-3711).